The primary structure comprises 379 residues: Queuine tRNA-ribosyltransferase (379 aa).

Asp93 acts as the Proton acceptor in catalysis. Residues 93–97 (DSGGF), Asp147, Gln191, and Gly218 each bind substrate. The interval 249–255 (GVGKPED) is RNA binding. Asp268 (nucleophile) is an active-site residue. An RNA binding; important for wobble base 34 recognition region spans residues 273-277 (TRNAR). Residues Cys306, Cys308, Cys311, and His337 each contribute to the Zn(2+) site.

Belongs to the queuine tRNA-ribosyltransferase family. As to quaternary structure, homodimer. Within each dimer, one monomer is responsible for RNA recognition and catalysis, while the other monomer binds to the replacement base PreQ1. Zn(2+) serves as cofactor.

The catalysed reaction is 7-aminomethyl-7-carbaguanine + guanosine(34) in tRNA = 7-aminomethyl-7-carbaguanosine(34) in tRNA + guanine. It functions in the pathway tRNA modification; tRNA-queuosine biosynthesis. Functionally, catalyzes the base-exchange of a guanine (G) residue with the queuine precursor 7-aminomethyl-7-deazaguanine (PreQ1) at position 34 (anticodon wobble position) in tRNAs with GU(N) anticodons (tRNA-Asp, -Asn, -His and -Tyr). Catalysis occurs through a double-displacement mechanism. The nucleophile active site attacks the C1' of nucleotide 34 to detach the guanine base from the RNA, forming a covalent enzyme-RNA intermediate. The proton acceptor active site deprotonates the incoming PreQ1, allowing a nucleophilic attack on the C1' of the ribose to form the product. After dissociation, two additional enzymatic reactions on the tRNA convert PreQ1 to queuine (Q), resulting in the hypermodified nucleoside queuosine (7-(((4,5-cis-dihydroxy-2-cyclopenten-1-yl)amino)methyl)-7-deazaguanosine). The polypeptide is Queuine tRNA-ribosyltransferase (Actinobacillus succinogenes (strain ATCC 55618 / DSM 22257 / CCUG 43843 / 130Z)).